The chain runs to 433 residues: 5-methylthioadenosine/S-adenosylhomocysteine deaminase (433 aa).

His67 and His69 together coordinate Zn(2+). Positions 96, 148, and 186 each coordinate substrate. His213 is a binding site for Zn(2+). Substrate is bound by residues Glu216 and Asp301. Residue Asp301 participates in Zn(2+) binding.

This sequence belongs to the metallo-dependent hydrolases superfamily. MTA/SAH deaminase family. It depends on Zn(2+) as a cofactor.

The catalysed reaction is S-adenosyl-L-homocysteine + H2O + H(+) = S-inosyl-L-homocysteine + NH4(+). It carries out the reaction S-methyl-5'-thioadenosine + H2O + H(+) = S-methyl-5'-thioinosine + NH4(+). Catalyzes the deamination of 5-methylthioadenosine and S-adenosyl-L-homocysteine into 5-methylthioinosine and S-inosyl-L-homocysteine, respectively. Is also able to deaminate adenosine. The protein is 5-methylthioadenosine/S-adenosylhomocysteine deaminase of Desulforamulus reducens (strain ATCC BAA-1160 / DSM 100696 / MI-1) (Desulfotomaculum reducens).